The chain runs to 349 residues: Green-sensitive opsin-2 (349 aa).

At 1-36 (MNGTEGNNFYVPLSNRTGLVRSPFEYPQYYLAEPWQ) the chain is on the extracellular side. N-linked (GlcNAc...) asparagine glycans are attached at residues Asn2 and Asn15. The chain crosses the membrane as a helical span at residues 37–61 (FKLLAVYMFFLICLGLPINGLTLIC). At 62 to 73 (TAQHKKLRQPLN) the chain is on the cytoplasmic side. The helical transmembrane segment at 74 to 99 (FILVNLAVAGAIMVCFGFTVTFYTAI) threads the bilayer. The Extracellular portion of the chain corresponds to 100–113 (NGYFALGPTGCAVE). Cys110 and Cys187 are disulfide-bonded. The chain crosses the membrane as a helical span at residues 114 to 133 (GFMATLGGEVALWSLVVLAI). Over 134 to 152 (ERYIVVCKPMGSFKFSSTH) the chain is Cytoplasmic. A helical transmembrane segment spans residues 153–176 (ASAGIAFTWVMAMACAAPPLVGWS). Topologically, residues 177–202 (RYIPEGIQCSCGPDYYTLNPEYNNES) are extracellular. The chain crosses the membrane as a helical span at residues 203–230 (YVLYMFICHFILPVTIIFFTYGRLVCTV). Residues 231–252 (KAAAAQQQDSASTQKAEREVTK) are Cytoplasmic-facing. Residues 253 to 276 (MVILMVLGFLVAWTPYATVAAWIF) form a helical membrane-spanning segment. Over 277–284 (FNKGAAFS) the chain is Extracellular. A helical membrane pass occupies residues 285–309 (AQFMAIPAFFSKTSALYNPVIYVLL). Lys296 bears the N6-(retinylidene)lysine mark. Over 310-349 (NKQFRSCMLTTLFCGKNPLGDEESSTVSTSKTEVSSVSPA) the chain is Cytoplasmic. A disordered region spans residues 329 to 349 (GDEESSTVSTSKTEVSSVSPA). Residues 334-349 (STVSTSKTEVSSVSPA) show a composition bias toward low complexity.

It belongs to the G-protein coupled receptor 1 family. Opsin subfamily. In terms of processing, phosphorylated on some or all of the serine and threonine residues present in the C-terminal region. In terms of tissue distribution, the color pigments are found in the cone photoreceptor cells.

It is found in the membrane. In terms of biological role, visual pigments are the light-absorbing molecules that mediate vision. They consist of an apoprotein, opsin, covalently linked to cis-retinal. The protein is Green-sensitive opsin-2 of Carassius auratus (Goldfish).